Consider the following 204-residue polypeptide: LexA repressor (204 aa).

Positions 31 to 51 (VREICAKVGLSSTSTVHGHLS) form a DNA-binding region, H-T-H motif. Catalysis depends on for autocatalytic cleavage activity residues Ser128 and Lys165.

It belongs to the peptidase S24 family. As to quaternary structure, homodimer.

The enzyme catalyses Hydrolysis of Ala-|-Gly bond in repressor LexA.. Its function is as follows. Represses a number of genes involved in the response to DNA damage (SOS response), including recA and lexA. In the presence of single-stranded DNA, RecA interacts with LexA causing an autocatalytic cleavage which disrupts the DNA-binding part of LexA, leading to derepression of the SOS regulon and eventually DNA repair. The polypeptide is LexA repressor (Clostridium acetobutylicum (strain ATCC 824 / DSM 792 / JCM 1419 / IAM 19013 / LMG 5710 / NBRC 13948 / NRRL B-527 / VKM B-1787 / 2291 / W)).